The following is a 622-amino-acid chain: Cell pattern formation-associated protein stuA (622 aa).

2 disordered regions span residues 1–24 (MASM…QTYA) and 62–81 (YPNS…SISS). Residues 129 to 235 (RVTATLWEDE…QHISNLLYHP (107 aa)) enclose the HTH APSES-type domain. The H-T-H motif DNA-binding region spans 163-184 (GTKLLNVAGMTRGRRDGILKSE). 2 disordered regions span residues 239 to 517 (NQRN…TPPR) and 549 to 622 (SNSG…SARR). Composition is skewed to polar residues over residues 274–283 (LQTPVPSHMS), 302–345 (ASAS…ARSM), and 355–370 (GNNL…QSGY). Positions 384 to 395 (PQYAPQQPLPQQ) are enriched in low complexity. Composition is skewed to polar residues over residues 404–421 (MPTS…QRGS), 455–470 (SGYN…TNPS), 480–506 (QLTP…NTAP), and 549–563 (SNSG…SMGS). Positions 565-590 (KRMRDDDDDRIVPPDSRGEFDTKRRK) are nuclear localization domain. The segment covering 566–586 (RMRDDDDDRIVPPDSRGEFDT) has biased composition (basic and acidic residues).

The protein belongs to the EFG1/PHD1/stuA family.

The protein resides in the nucleus. In terms of biological role, transcription factor that regulates asexual reproduction. Binds the StuA-response elements (StRE) with the consensus sequence 5'-(A/T)CGCG(T/A)N(A/C)-3' at the promoters of target genes. Required from the very earliest events of asexual reproduction until completion of conidiophore development, but is not specifically required for differentiation of conidia. Represses transcription of the abaA developmental regulatory gene and of the developmentally regulated awh11 gene. Controls the expression of the catalase-peroxidase gene cpeA. Plays an important role in cell wall biogenesis during the development by controlling the transcription level of fksA. The polypeptide is Cell pattern formation-associated protein stuA (Emericella nidulans (strain FGSC A4 / ATCC 38163 / CBS 112.46 / NRRL 194 / M139) (Aspergillus nidulans)).